A 367-amino-acid polypeptide reads, in one-letter code: UDP-N-acetylglucosamine--N-acetylmuramyl-(pentapeptide) pyrophosphoryl-undecaprenol N-acetylglucosamine transferase (367 aa).

UDP-N-acetyl-alpha-D-glucosamine is bound by residues 15-17, Asn-127, Arg-163, Ser-191, Ile-249, and Gln-294; that span reads TGG.

The protein belongs to the glycosyltransferase 28 family. MurG subfamily.

It is found in the cell inner membrane. The catalysed reaction is di-trans,octa-cis-undecaprenyl diphospho-N-acetyl-alpha-D-muramoyl-L-alanyl-D-glutamyl-meso-2,6-diaminopimeloyl-D-alanyl-D-alanine + UDP-N-acetyl-alpha-D-glucosamine = di-trans,octa-cis-undecaprenyl diphospho-[N-acetyl-alpha-D-glucosaminyl-(1-&gt;4)]-N-acetyl-alpha-D-muramoyl-L-alanyl-D-glutamyl-meso-2,6-diaminopimeloyl-D-alanyl-D-alanine + UDP + H(+). The protein operates within cell wall biogenesis; peptidoglycan biosynthesis. In terms of biological role, cell wall formation. Catalyzes the transfer of a GlcNAc subunit on undecaprenyl-pyrophosphoryl-MurNAc-pentapeptide (lipid intermediate I) to form undecaprenyl-pyrophosphoryl-MurNAc-(pentapeptide)GlcNAc (lipid intermediate II). The polypeptide is UDP-N-acetylglucosamine--N-acetylmuramyl-(pentapeptide) pyrophosphoryl-undecaprenol N-acetylglucosamine transferase (Burkholderia pseudomallei (strain 668)).